The primary structure comprises 257 residues: Imidazole glycerol phosphate synthase subunit HisF (257 aa).

Catalysis depends on residues Asp12 and Asp131.

This sequence belongs to the HisA/HisF family. As to quaternary structure, heterodimer of HisH and HisF.

The protein localises to the cytoplasm. It carries out the reaction 5-[(5-phospho-1-deoxy-D-ribulos-1-ylimino)methylamino]-1-(5-phospho-beta-D-ribosyl)imidazole-4-carboxamide + L-glutamine = D-erythro-1-(imidazol-4-yl)glycerol 3-phosphate + 5-amino-1-(5-phospho-beta-D-ribosyl)imidazole-4-carboxamide + L-glutamate + H(+). It functions in the pathway amino-acid biosynthesis; L-histidine biosynthesis; L-histidine from 5-phospho-alpha-D-ribose 1-diphosphate: step 5/9. Its function is as follows. IGPS catalyzes the conversion of PRFAR and glutamine to IGP, AICAR and glutamate. The HisF subunit catalyzes the cyclization activity that produces IGP and AICAR from PRFAR using the ammonia provided by the HisH subunit. In Burkholderia vietnamiensis (strain G4 / LMG 22486) (Burkholderia cepacia (strain R1808)), this protein is Imidazole glycerol phosphate synthase subunit HisF.